Here is a 288-residue protein sequence, read N- to C-terminus: Energy-coupling factor transporter ATP-binding protein EcfA2 (288 aa).

The 244-residue stretch at 3-246 (ITFDHVSFTY…PAWLKANQLG (244 aa)) folds into the ABC transporter domain. An ATP-binding site is contributed by 40-47 (GHTGSGKS). Glu171 functions as the Proton acceptor in the catalytic mechanism.

The protein belongs to the ABC transporter superfamily. Energy-coupling factor EcfA family. In terms of assembly, forms a stable energy-coupling factor (ECF) transporter complex probably composed of 2 membrane-embedded substrate-binding proteins (S component), 2 ATP-binding proteins (A component) and 2 transmembrane proteins (T component). This complex interacts with a number of substrate-specific components, including FolT and ThiT for 5-formyltetrahydrofolate and thiamine respectively.

Its subcellular location is the cell membrane. Its function is as follows. ATP-binding (A) component of a common energy-coupling factor (ECF) ABC-transporter complex. Unlike classic ABC transporters this ECF transporter provides the energy necessary to transport a number of different substrates including 5-formyltetrahydrofolate and thiamine. Expression of the complex plus FolT or ThiT in Lactococcus lactis subsp. cremoris (strain NZ9000) allows 5-formyltetrahydrofolate or thiamine uptake respectively; 5-formyltetrahydrofolate or thiamine are not taken up in the absence of FolT/ThiT or the EcfA1A2T complex. Deenergized L.lactis subsp. cremoris (treated with 2-deoxyglucose) do not take up substrate. This Lacticaseibacillus paracasei (strain ATCC 334 / BCRC 17002 / CCUG 31169 / CIP 107868 / KCTC 3260 / NRRL B-441) (Lactobacillus paracasei) protein is Energy-coupling factor transporter ATP-binding protein EcfA2.